Consider the following 449-residue polypeptide: BPI fold-containing family B member 6 (449 aa).

The N-terminal stretch at 1–18 (MLCSLSLVLCGLLAGTRA) is a signal peptide. N115 is a glycosylation site (N-linked (GlcNAc...) asparagine). A disulfide bond links C138 and C172.

This sequence belongs to the BPI/LBP/Plunc superfamily. BPI/LBP family.

Its subcellular location is the secreted. The chain is BPI fold-containing family B member 6 (Bpifb6) from Mus musculus (Mouse).